The chain runs to 242 residues: NAD-dependent protein deacylase 1 (242 aa).

A Deacetylase sirtuin-type domain is found at 1 to 242 (MDFKILKEKL…FAMKFEEKEG (242 aa)). Residue 21-40 (GAGISKESGIPTFRGEDGLW) participates in NAD(+) binding. Residues Tyr65 and Arg68 each coordinate substrate. 99–102 (QNVD) contacts NAD(+). His117 acts as the Proton acceptor in catalysis. Positions 125, 128, 146, and 149 each coordinate Zn(2+). NAD(+) is bound by residues 186-188 (GTS) and Glu241.

This sequence belongs to the sirtuin family. Class III subfamily. Zn(2+) is required as a cofactor.

Its subcellular location is the cytoplasm. It carries out the reaction N(6)-acetyl-L-lysyl-[protein] + NAD(+) + H2O = 2''-O-acetyl-ADP-D-ribose + nicotinamide + L-lysyl-[protein]. The enzyme catalyses N(6)-succinyl-L-lysyl-[protein] + NAD(+) + H2O = 2''-O-succinyl-ADP-D-ribose + nicotinamide + L-lysyl-[protein]. Its function is as follows. NAD-dependent lysine deacetylase and desuccinylase that specifically removes acetyl and succinyl groups on target proteins. Modulates the activities of several proteins which are inactive in their acylated form. In Caldanaerobacter subterraneus subsp. tengcongensis (strain DSM 15242 / JCM 11007 / NBRC 100824 / MB4) (Thermoanaerobacter tengcongensis), this protein is NAD-dependent protein deacylase 1.